Consider the following 215-residue polypeptide: Orotate phosphoribosyltransferase (215 aa).

K26 serves as a coordination point for 5-phospho-alpha-D-ribose 1-diphosphate. 34-35 (FF) lines the orotate pocket. Residues 72–73 (YK), R99, K100, K103, H105, and 124–132 (DDVITAGTA) each bind 5-phospho-alpha-D-ribose 1-diphosphate. Orotate is bound by residues T128 and R156.

It belongs to the purine/pyrimidine phosphoribosyltransferase family. PyrE subfamily. In terms of assembly, homodimer. Mg(2+) serves as cofactor.

It catalyses the reaction orotidine 5'-phosphate + diphosphate = orotate + 5-phospho-alpha-D-ribose 1-diphosphate. It functions in the pathway pyrimidine metabolism; UMP biosynthesis via de novo pathway; UMP from orotate: step 1/2. In terms of biological role, catalyzes the transfer of a ribosyl phosphate group from 5-phosphoribose 1-diphosphate to orotate, leading to the formation of orotidine monophosphate (OMP). The polypeptide is Orotate phosphoribosyltransferase (Hahella chejuensis (strain KCTC 2396)).